The following is a 38-amino-acid chain: Bacteriocin BAC79 (38 aa).

Its activity is regulated as follows. The antimicrobial activity of BAC79 was completely lost after treatment with enzymes trypsin, pepsin, proteinase-K, and carboxypeptidase, while there was no loss of activity with either amylase or lipase. Its function is as follows. Has antibacterial activity against a wide spectrum of Gram-positive and Gram-negative bacteria, including L.monocytogenes which is inhibited through disruption of the cell membrane. The sequence is that of Bacteriocin BAC79 from Weissella confusa (Lactobacillus confusus).